The primary structure comprises 200 residues: Pre-mRNA cleavage factor Im 25 kDa subunit 2 (200 aa).

A Nudix hydrolase domain is found at Gly45 to Leu172. The interval Thr72–Cys74 is interaction with RNA. Positions Gly79 to Gly100 match the Nudix box motif.

It belongs to the Nudix hydrolase family. CPSF5 subfamily. Homodimer. Component of the cleavage factor Im (CFIm) complex. Forms a complex with cleavage and polyadenylation specificity factor (CPSF) subunits FIPS5, PAPS4 and CPSF30.

The protein localises to the nucleus. In terms of biological role, component of the cleavage factor Im (CFIm) complex that plays a key role in pre-mRNA 3'-processing. Involved in association with CPSF6 or CPSF7 in pre-MRNA 3'-end poly(A) site cleavage and poly(A) addition. NUDT21/CPSF5 binds to cleavage and polyadenylation RNA substrates. The homodimer mediates simultaneous sequence-specific recognition of two 5'-UGUA-3' elements within the pre-mRNA. Binds to, but does not hydrolyze mono- and di-adenosine nucleotides. May have a role in mRNA export. In Arabidopsis thaliana (Mouse-ear cress), this protein is Pre-mRNA cleavage factor Im 25 kDa subunit 2.